A 292-amino-acid polypeptide reads, in one-letter code: Bifunctional protein FolD 1 (292 aa).

165 to 167 (GRS) serves as a coordination point for NADP(+).

Belongs to the tetrahydrofolate dehydrogenase/cyclohydrolase family. As to quaternary structure, homodimer.

It carries out the reaction (6R)-5,10-methylene-5,6,7,8-tetrahydrofolate + NADP(+) = (6R)-5,10-methenyltetrahydrofolate + NADPH. The enzyme catalyses (6R)-5,10-methenyltetrahydrofolate + H2O = (6R)-10-formyltetrahydrofolate + H(+). The protein operates within one-carbon metabolism; tetrahydrofolate interconversion. Its function is as follows. Catalyzes the oxidation of 5,10-methylenetetrahydrofolate to 5,10-methenyltetrahydrofolate and then the hydrolysis of 5,10-methenyltetrahydrofolate to 10-formyltetrahydrofolate. The protein is Bifunctional protein FolD 1 of Myxococcus xanthus (strain DK1622).